The chain runs to 330 residues: 4-hydroxythreonine-4-phosphate dehydrogenase (330 aa).

T133 contacts substrate. Positions 161, 206, and 261 each coordinate a divalent metal cation. Substrate contacts are provided by K269, N278, and R287.

This sequence belongs to the PdxA family. As to quaternary structure, homodimer. Requires Zn(2+) as cofactor. It depends on Mg(2+) as a cofactor. The cofactor is Co(2+).

It is found in the cytoplasm. The enzyme catalyses 4-(phosphooxy)-L-threonine + NAD(+) = 3-amino-2-oxopropyl phosphate + CO2 + NADH. It functions in the pathway cofactor biosynthesis; pyridoxine 5'-phosphate biosynthesis; pyridoxine 5'-phosphate from D-erythrose 4-phosphate: step 4/5. Its function is as follows. Catalyzes the NAD(P)-dependent oxidation of 4-(phosphooxy)-L-threonine (HTP) into 2-amino-3-oxo-4-(phosphooxy)butyric acid which spontaneously decarboxylates to form 3-amino-2-oxopropyl phosphate (AHAP). The chain is 4-hydroxythreonine-4-phosphate dehydrogenase from Xylella fastidiosa (strain Temecula1 / ATCC 700964).